A 330-amino-acid polypeptide reads, in one-letter code: Peroxisomal membrane protein PEX13 (330 aa).

Positions 1-14 are enriched in pro residues; sequence MSAPPTNQPPPLPP. The disordered stretch occupies residues 1–20; that stretch reads MSAPPTNQPPPLPPRSFDNQ. Residues 193 to 213 form a helical membrane-spanning segment; sequence ASVNWPAALFWVVAIGGPWLI. Residues 235-300 enclose the SH3 domain; it reads APHYTAQALF…PINYVRIVGK (66 aa).

This sequence belongs to the peroxin-13 family. In terms of assembly, interacts with PEX14/prx-14; forming the PEX13-PEX14 docking complex.

The protein resides in the peroxisome membrane. Component of the PEX13-PEX14 docking complex, a translocon channel that specifically mediates the import of peroxisomal cargo proteins bound to PEX5/prx-5 receptor. The PEX13-PEX14 docking complex forms a large import pore which can be opened to a diameter of about 9 nm. Mechanistically, PEX5/prx-5 receptor along with cargo proteins associates with the PEX14/prx-14 subunit of the PEX13-PEX14 docking complex in the cytosol, leading to the insertion of the receptor into the organelle membrane with the concomitant translocation of the cargo into the peroxisome matrix. This is Peroxisomal membrane protein PEX13 (prx-13) from Caenorhabditis elegans.